Reading from the N-terminus, the 364-residue chain is MNRATATINVTALKHNLSQIKALAPKSLAWAMIKSNGYGHGLVRVAKALSDANAFGVACIDEALTLREVGIKSPIIVMKGFYNEAELSQFARHRLGAVIHCSDQVSLLEKTNLTSSLSVWLKIDTGMNRLGFSVEQSPAVYNQLKTSSSIQKPIGLMTHLADADNENKTFTELQIKRFFSVTEKMIGPKSIVNSAGFFAYPNALVDLIRPGIILYGISPFGINYNSFKEKIEKKFRPVMTLSAKIIAIKNRRQNDSVGYGCTWSCPEDMPIAIVSIGYGDGYPRHAPSGTPVLLNGKICPLIGRVSMDMIAIDLRSQPNAQVGDDVILWGEGLPVEIIAEKAGTIAYELLCKITQRVQFIEIEK.

Lys-34 (proton acceptor; specific for D-alanine) is an active-site residue. Position 34 is an N6-(pyridoxal phosphate)lysine (Lys-34). Arg-129 serves as a coordination point for substrate. Tyr-259 serves as the catalytic Proton acceptor; specific for L-alanine. Residue Met-307 coordinates substrate.

The protein belongs to the alanine racemase family. It depends on pyridoxal 5'-phosphate as a cofactor.

It catalyses the reaction L-alanine = D-alanine. The protein operates within amino-acid biosynthesis; D-alanine biosynthesis; D-alanine from L-alanine: step 1/1. Catalyzes the interconversion of L-alanine and D-alanine. May also act on other amino acids. This Coxiella burnetii (strain CbuK_Q154) (Coxiella burnetii (strain Q154)) protein is Alanine racemase (alr).